The sequence spans 120 residues: NAD(P)H-quinone oxidoreductase subunit 3 (120 aa).

The next 3 helical transmembrane spans lie at 10–30 (FLGF…TNLI), 64–84 (MFAL…PWAV), and 89–109 (LGLL…IALA).

Belongs to the complex I subunit 3 family. In terms of assembly, NDH-1 can be composed of about 15 different subunits; different subcomplexes with different compositions have been identified which probably have different functions.

It localises to the cellular thylakoid membrane. The catalysed reaction is a plastoquinone + NADH + (n+1) H(+)(in) = a plastoquinol + NAD(+) + n H(+)(out). The enzyme catalyses a plastoquinone + NADPH + (n+1) H(+)(in) = a plastoquinol + NADP(+) + n H(+)(out). Functionally, NDH-1 shuttles electrons from an unknown electron donor, via FMN and iron-sulfur (Fe-S) centers, to quinones in the respiratory and/or the photosynthetic chain. The immediate electron acceptor for the enzyme in this species is believed to be plastoquinone. Couples the redox reaction to proton translocation, and thus conserves the redox energy in a proton gradient. Cyanobacterial NDH-1 also plays a role in inorganic carbon-concentration. This Prochlorococcus marinus (strain MIT 9515) protein is NAD(P)H-quinone oxidoreductase subunit 3.